The sequence spans 260 residues: Glutathione S-transferase domain-containing protein DDB_G0274223 (260 aa).

A GST N-terminal domain is found at 7–96; that stretch reads KVDYIFYTNN…YLAQKYNTFL (90 aa). A GST C-terminal domain is found at 102-233; the sequence is NPHENSDVIT…GFKTFNPSAL (132 aa).

It belongs to the GST superfamily.

This is Glutathione S-transferase domain-containing protein DDB_G0274223 from Dictyostelium discoideum (Social amoeba).